A 160-amino-acid polypeptide reads, in one-letter code: Large ribosomal subunit protein uL13 (160 aa).

The protein belongs to the universal ribosomal protein uL13 family. Part of the 50S ribosomal subunit.

Its function is as follows. This protein is one of the early assembly proteins of the 50S ribosomal subunit, although it is not seen to bind rRNA by itself. It is important during the early stages of 50S assembly. The polypeptide is Large ribosomal subunit protein uL13 (Orientia tsutsugamushi (strain Ikeda) (Rickettsia tsutsugamushi)).